Consider the following 153-residue polypeptide: Interleukin-4 (153 aa).

The N-terminal stretch at 1 to 24 (MGLTSQLLPPLFFLLACAGNFAHG) is a signal peptide. Cystine bridges form between C27-C151, C48-C89, and C70-C123. N-linked (GlcNAc...) asparagine glycosylation occurs at N62. A glycan (N-linked (GlcNAc...) asparagine) is linked at N129.

Belongs to the IL-4/IL-13 family.

The protein resides in the secreted. In terms of biological role, participates in at least several B-cell activation processes as well as of other cell types. It is a costimulator of DNA-synthesis. It induces the expression of class II MHC molecules on resting B-cells. It enhances both secretion and cell surface expression of IgE and IgG1. It also regulates the expression of the low affinity Fc receptor for IgE (CD23) on both lymphocytes and monocytes. Positively regulates IL31RA expression in macrophages. Stimulates autophagy in dendritic cells by interfering with mTORC1 signaling and through the induction of RUFY4. This Macaca mulatta (Rhesus macaque) protein is Interleukin-4 (IL4).